The following is a 455-amino-acid chain: Asparagine--tRNA ligase (455 aa).

Belongs to the class-II aminoacyl-tRNA synthetase family. In terms of assembly, homodimer.

The protein localises to the cytoplasm. It catalyses the reaction tRNA(Asn) + L-asparagine + ATP = L-asparaginyl-tRNA(Asn) + AMP + diphosphate + H(+). The protein is Asparagine--tRNA ligase of Lawsonia intracellularis (strain PHE/MN1-00).